The sequence spans 545 residues: Protein BTN1 (545 aa).

Positions 23-49 (AHSSASDPRRTMVTNTSESPLASRQAT) are disordered. Polar residues predominate over residues 34-49 (MVTNTSESPLASRQAT). The next 5 helical transmembrane spans lie at 66–86 (AFFLFGLLNNSLYVVILTAAL), 97–117 (LVSFANIFPALIAKAIWPYFL), 127–147 (VWSCAALSFIGMLLVSFFPAL), 205–225 (VGWFASGTGAAGLIGAAAWWV), and 234–254 (GMAILSVLPAFMIMAYAIILP). A disordered region spans residues 276-304 (TEDDAVERSSSDDQPTTANDDRQDSTIHI). The next 3 helical transmembrane spans lie at 322 to 342 (MALLKPMLQPYIIPLVIVYAM), 408 to 428 (LLWLPAVLQTGLLAVLLTESL), and 440 to 460 (LVIVLICVEGLAGGSAYVSVF).

This sequence belongs to the battenin family.

The protein resides in the vacuole membrane. Functionally, involved in vacuolar transport and vacuole pH homeostasis. Also required for cytokinesis. This Mycosarcoma maydis (Corn smut fungus) protein is Protein BTN1 (BTN1).